The following is a 290-amino-acid chain: Pirin (290 aa).

Fe cation-binding residues include His-56, His-58, His-101, and Glu-103.

Belongs to the pirin family. In terms of assembly, may interact with NF1/CTF1. Interacts with BCL3. Identified in a complex comprised of PIR, BLC3, NFKB1 and target DNA. It depends on Fe cation as a cofactor. Weakly expressed in bone marrow.

The protein localises to the nucleus. Its subcellular location is the cytoplasm. The enzyme catalyses quercetin + O2 = 2-(3,4-dihydroxybenzoyloxy)-4,6-dihydroxybenzoate + CO. It functions in the pathway flavonoid metabolism; quercetin degradation. Transcriptional coregulator of NF-kappa-B which facilitates binding of NF-kappa-B proteins to target kappa-B genes in a redox-state-dependent manner. May be required for efficient terminal myeloid maturation of hematopoietic cells. Has quercetin 2,3-dioxygenase activity (in vitro). This Mus musculus (Mouse) protein is Pirin (Pir).